The primary structure comprises 232 residues: Protein DOG1-like 4 (232 aa).

One can recognise a DOG1 domain in the interval 9–229 (EEKFLEFYES…RRWGNRRHYV (221 aa)).

This is Protein DOG1-like 4 from Arabidopsis thaliana (Mouse-ear cress).